Reading from the N-terminus, the 216-residue chain is Transmembrane emp24 domain-containing protein eca (216 aa).

An N-terminal signal peptide occupies residues 1–20; that stretch reads MRNQFICVALLLCALNSACG. The Lumenal portion of the chain corresponds to 21–183; it reads LYFHISETER…RHTSESTNSR (163 aa). The region spanning 30 to 126 is the GOLD domain; it reads RKCFIEEVPD…QLRVHLDIQV (97 aa). Residues 134–164 are a coiled coil; sequence ANVAQKEKLTELQLRIRQLLDQVDQITKEQN. Residues 184–203 traverse the membrane as a helical segment; sequence VLWWSLAQTVVLVCMGFWQM. Topologically, residues 204–216 are cytoplasmic; sequence RHLKSFFEAKKLV. Positions 213–216 match the Prevents secretion from ER motif; it reads KKLV.

Belongs to the EMP24/GP25L family.

It is found in the endoplasmic reticulum membrane. In terms of biological role, eca and bai are essential, though not redundant, for dorsoventral patterning of the embryo. Specifically required during early embryogenesis for the activity of maternal tkv, while the zygotic tkv is not affected. Involved in Golgi organization. This chain is Transmembrane emp24 domain-containing protein eca, found in Drosophila willistoni (Fruit fly).